A 303-amino-acid chain; its full sequence is Coenzyme PQQ synthesis protein B (303 aa).

This sequence belongs to the PqqB family.

It participates in cofactor biosynthesis; pyrroloquinoline quinone biosynthesis. Its function is as follows. May be involved in the transport of PQQ or its precursor to the periplasm. The chain is Coenzyme PQQ synthesis protein B from Pseudomonas fluorescens (strain Pf0-1).